Consider the following 436-residue polypeptide: Gamma-glutamyl phosphate reductase (436 aa).

This sequence belongs to the gamma-glutamyl phosphate reductase family.

It localises to the cytoplasm. The enzyme catalyses L-glutamate 5-semialdehyde + phosphate + NADP(+) = L-glutamyl 5-phosphate + NADPH + H(+). Its pathway is amino-acid biosynthesis; L-proline biosynthesis; L-glutamate 5-semialdehyde from L-glutamate: step 2/2. Functionally, catalyzes the NADPH-dependent reduction of L-glutamate 5-phosphate into L-glutamate 5-semialdehyde and phosphate. The product spontaneously undergoes cyclization to form 1-pyrroline-5-carboxylate. The sequence is that of Gamma-glutamyl phosphate reductase from Prochlorococcus marinus subsp. pastoris (strain CCMP1986 / NIES-2087 / MED4).